The sequence spans 297 residues: Homeobox protein HMX3 (297 aa).

2 disordered regions span residues 24–43 (NSDSKPSKPKPILAPTKAGL) and 96–172 (AAQK…RKKK). Composition is skewed to basic and acidic residues over residues 109-123 (TDRDSPELVLKSDPD) and 145-166 (EDGKKEGGIDDWKKSDDGADKK). Positions 170–229 (KKKTRTVFSRSQVFQLESTFDMKRYLSSSERAGLAASLHLTETQVKIWFQNRRNKWKRQL) form a DNA-binding region, homeobox.

Belongs to the HMX homeobox family. As to expression, expressed in the ear placode and vesicle and in cells forming the vestibulo-acoustic ganglion. Also expressed in the lateral line.

The protein localises to the nucleus. Its function is as follows. Transcription factor involved in specification of neuronal cell types and which is required for inner ear and hypothalamus development. Binds to the 5'-CAAGTG-3' core sequence. The polypeptide is Homeobox protein HMX3 (hmx3) (Danio rerio (Zebrafish)).